Here is a 407-residue protein sequence, read N- to C-terminus: Methylthioribose kinase (407 aa).

Residues Asn-40, Lys-57, and 111–113 (EDL) contribute to the ATP site. Asp-229 contacts substrate. An ATP-binding site is contributed by 246–248 (DAE). Arg-344 provides a ligand contact to substrate.

This sequence belongs to the methylthioribose kinase family. Homodimer.

It carries out the reaction 5-(methylsulfanyl)-D-ribose + ATP = 5-(methylsulfanyl)-alpha-D-ribose 1-phosphate + ADP + H(+). Its pathway is amino-acid biosynthesis; L-methionine biosynthesis via salvage pathway; S-methyl-5-thio-alpha-D-ribose 1-phosphate from S-methyl-5'-thioadenosine (hydrolase route): step 2/2. In terms of biological role, catalyzes the phosphorylation of methylthioribose into methylthioribose-1-phosphate. This chain is Methylthioribose kinase, found in Yersinia pseudotuberculosis serotype IB (strain PB1/+).